We begin with the raw amino-acid sequence, 120 residues long: Peptidyl-tRNA hydrolase (120 aa).

It belongs to the PTH2 family.

Its subcellular location is the cytoplasm. The catalysed reaction is an N-acyl-L-alpha-aminoacyl-tRNA + H2O = an N-acyl-L-amino acid + a tRNA + H(+). In terms of biological role, the natural substrate for this enzyme may be peptidyl-tRNAs which drop off the ribosome during protein synthesis. In Saccharolobus islandicus (strain Y.N.15.51 / Yellowstone #2) (Sulfolobus islandicus), this protein is Peptidyl-tRNA hydrolase.